We begin with the raw amino-acid sequence, 321 residues long: Protein translocase subunit SecF (321 aa).

A run of 6 helical transmembrane segments spans residues 23-43 (VWLI…FSWT), 158-178 (LQTT…YISI), 189-209 (LLAL…LGII), 217-237 (LFAV…VVVF), 258-280 (FAVS…PLIA), and 290-312 (YWFA…ALVP).

This sequence belongs to the SecD/SecF family. SecF subfamily. In terms of assembly, forms a complex with SecD. Part of the essential Sec protein translocation apparatus which comprises SecA, SecYEG and auxiliary proteins SecDF. Other proteins may also be involved.

The protein resides in the cell inner membrane. Part of the Sec protein translocase complex. Interacts with the SecYEG preprotein conducting channel. SecDF uses the proton motive force (PMF) to complete protein translocation after the ATP-dependent function of SecA. In terms of biological role, probably participates in protein translocation into and across both the cytoplasmic and thylakoid membranes in cyanobacterial cells. This chain is Protein translocase subunit SecF, found in Prochlorococcus marinus (strain SARG / CCMP1375 / SS120).